A 276-amino-acid chain; its full sequence is Radial spoke head protein 9 homolog (276 aa).

It belongs to the flagellar radial spoke RSP9 family. As to quaternary structure, component of the axonemal radial spoke 1 (RS1) and 2 (RS2) complexes, at least composed of spoke head proteins RSPH1, RSPH3, RSPH9 and the cilia-specific component RSPH4A or sperm-specific component RSPH6A, spoke stalk proteins RSPH14, DNAJB13, DYDC1, ROPN1L and NME5, and the RS1 complex-specific anchor protein IQUB. Interacts with IQUB. Interacts with RSPH3B. Interacts with RSPH4A. Interacts with RSPH6A. Interacts with CFAP61. Interacts with LRRC23.

It localises to the cytoplasm. The protein resides in the cytoskeleton. Its subcellular location is the cilium axoneme. It is found in the flagellum axoneme. The protein localises to the cell projection. It localises to the kinocilium. Functionally, functions as part of axonemal radial spoke complexes that play an important part in the motility of sperm and cilia. Essential for both the radial spoke head assembly and the central pair microtubule stability in ependymal motile cilia. Required for motility of olfactory and neural cilia and for the structural integrity of ciliary axonemes in both 9+0 and 9+2 motile cilia. This is Radial spoke head protein 9 homolog (RSPH9) from Homo sapiens (Human).